Consider the following 1338-residue polypeptide: Nonribosomal peptide synthetase astA (1338 aa).

Positions I22–L52 are disordered. The tract at residues F271–R681 is adenylation. The Carrier domain occupies T820–G893. S854 is subject to O-(pantetheine 4'-phosphoryl)serine. The segment at T949–S1336 is condensation.

Belongs to the NRP synthetase family.

The catalysed reaction is 7beta,14,16-trihydroxyconfertifolin + benzoate + H(+) = dideacetyl astellolide A + H2O. The enzyme catalyses 7beta,14,16-trihydroxyconfertifolin + 4-hydroxybenzoate + H(+) = dideacetyl astellolide B + H2O. It participates in secondary metabolite biosynthesis; terpenoid biosynthesis. Its function is as follows. Nonribosomal peptide synthetase; part of the gene cluster that mediates the biosynthesis of astellolides, drimane-type sesquiterpene esters that show antimicrobial, anti-inflammatory, and anti-tumor activities. The first step in astellolide biosynthesis is performed by the sesquiterpene cyclase astC that catalyzes the formation of drimanyl pyrophosphate from farnesyl pyrophosphate. Drimanyl pyrophosphate is then dephosphorylated by the sesquiterpene phosphatase astI to produce drimanyl monophosphate which is further dephosphorylated to drim-8-ene-11-ol by atsK. Drim-8-ene-11-ol is converted to confertifolin, probably by the cytochrome P450 monooxygenase astD and/or the dehydrogenase astE. The cytochrome P450 monooxygenases astB, astF and astJ then hydroxylate confertifolin at C6, C14, or C15 to form trihydroxy confertifolin. The nonribosomal peptide synthetase astA catalyzes ester bond formation between trihydroxy contifolin and benzoic acid (BA) or 4-hydroxy benzoic acid (4HBA), leading to the formation of dideacetyl astellolides A and B, respectively. Finally, the O-acetyltransferase astG converts dideacetyl astellolides A and B into deacetyl astellolides A and B. The polypeptide is Nonribosomal peptide synthetase astA (Aspergillus oryzae (strain ATCC 42149 / RIB 40) (Yellow koji mold)).